We begin with the raw amino-acid sequence, 286 residues long: ATP synthase gamma chain (286 aa).

It belongs to the ATPase gamma chain family. As to quaternary structure, F-type ATPases have 2 components, CF(1) - the catalytic core - and CF(0) - the membrane proton channel. CF(1) has five subunits: alpha(3), beta(3), gamma(1), delta(1), epsilon(1). CF(0) has three main subunits: a, b and c.

It localises to the cell membrane. Produces ATP from ADP in the presence of a proton gradient across the membrane. The gamma chain is believed to be important in regulating ATPase activity and the flow of protons through the CF(0) complex. The chain is ATP synthase gamma chain from Bacillus mycoides (strain KBAB4) (Bacillus weihenstephanensis).